The sequence spans 454 residues: Nuclear envelope integral membrane protein (454 aa).

The N-terminal stretch at 1-18 (MHSAGLLMLTVAGYFTSG) is a signal peptide. The N-linked (GlcNAc...) asparagine glycan is linked to N38. A run of 5 helical transmembrane segments spans residues 138 to 158 (IPLD…LFSA), 166 to 186 (VFYY…VVIY), 197 to 217 (MMYG…KQLA), 231 to 251 (VLGY…RIGP), and 280 to 300 (TSAV…PISW). The span at 388-405 (SMDAAPEEESVEEPEEDK) shows a compositional bias: acidic residues. A disordered region spans residues 388-454 (SMDAAPEEES…QEVDLRQVVQ (67 aa)). Positions 414–424 (NSQFRYQQAAR) are enriched in polar residues. A compositionally biased stretch (acidic residues) spans 428–446 (PEPESESDDSEEEEFFEQE).

The protein belongs to the NEMP family. As to quaternary structure, interacts with OTE. Expressed in both germline and somatic cells in the larval testis and prepupal ovary (at protein level). Also detected in the larval eye and larval wing disk (at protein level).

The protein resides in the nucleus inner membrane. Contributes to nuclear envelope stiffness in germ cells. Required for male and female fertility. This Drosophila melanogaster (Fruit fly) protein is Nuclear envelope integral membrane protein.